The sequence spans 1012 residues: Formate dehydrogenase 2 subunit alpha (cytochrome c-553) (1012 aa).

Positions 1–33 (MKTTRRSFLKLVGVSVVGLSLGQLGFDLEDAQA) form a signal peptide, tat-type signal. In terms of domain architecture, 4Fe-4S Mo/W bis-MGD-type spans 43 to 99 (AKEVGTVCPFCSVCCQVIAYVRNGKLVSTEGDPDFPVNEGALCAKGAALFSMYTNPH). Cys-50, Cys-53, Cys-57, and Cys-85 together coordinate [4Fe-4S] cluster. Sec-189 lines the W-bis(molybdopterin guanine dinucleotide) pocket. Sec-189 is a non-standard amino acid (selenocysteine). The Ca(2+) site is built by Thr-389, Arg-391, Lys-394, Leu-424, and Asn-426.

It belongs to the prokaryotic molybdopterin-containing oxidoreductase family. In terms of assembly, heterotrimer of cytochrome c3 FDH2C and formate dehydrogenase FDH2 alpha and beta subunits that forms the FdhABC(3) complex. [4Fe-4S] cluster is required as a cofactor. W-bis(molybdopterin guanine dinucleotide) serves as cofactor. In terms of processing, predicted to be exported by the Tat system. The position of the signal peptide cleavage has not been experimentally proven.

Its subcellular location is the periplasm. It carries out the reaction 2 Fe(III)-[cytochrome c553] + formate = 2 Fe(II)-[cytochrome c553] + CO2 + H(+). Alpha chain of the formate dehydrogenase (FDH) that catalyzes the reversible two-electron oxidation of formate to carbon dioxide. The alpha subunit of formate dehydrogenase forms the active site. The chain is Formate dehydrogenase 2 subunit alpha (cytochrome c-553) from Nitratidesulfovibrio vulgaris (strain ATCC 29579 / DSM 644 / CCUG 34227 / NCIMB 8303 / VKM B-1760 / Hildenborough) (Desulfovibrio vulgaris).